A 202-amino-acid chain; its full sequence is Small ribosomal subunit protein uS4 (202 aa).

The disordered stretch occupies residues 21-42 (LSRKSPRRAYPPGQHGQARRKR). Residues 90 to 152 (MRLDNTVFRL…DRSRKLVETN (63 aa)) enclose the S4 RNA-binding domain.

Belongs to the universal ribosomal protein uS4 family. Part of the 30S ribosomal subunit. Contacts protein S5. The interaction surface between S4 and S5 is involved in control of translational fidelity.

Its function is as follows. One of the primary rRNA binding proteins, it binds directly to 16S rRNA where it nucleates assembly of the body of the 30S subunit. With S5 and S12 plays an important role in translational accuracy. This Synechocystis sp. (strain ATCC 27184 / PCC 6803 / Kazusa) protein is Small ribosomal subunit protein uS4.